The sequence spans 460 residues: Nitrilase and fragile histidine triad fusion protein NitFhit (460 aa).

Residues 33–279 (ATIAVGQMRS…LDIGTAEVDL (247 aa)) enclose the CN hydrolase domain. Residues E72, K142, and C183 contribute to the active site. Residues 315 to 422 (DRPFATNIVD…MPRRLGDFGH (108 aa)) form the HIT domain. The Histidine triad motif signature appears at 407 to 411 (HVHFH). The active-site Tele-AMP-histidine intermediate is H409.

The protein in the N-terminal section; belongs to the UPF0012 family. In terms of assembly, homotetramer. Mn(2+) serves as cofactor.

It carries out the reaction P(1),P(3)-bis(5'-adenosyl) triphosphate + H2O = AMP + ADP + 2 H(+). In terms of biological role, cleaves A-5'-PPP-5'A to yield AMP and ADP. The chain is Nitrilase and fragile histidine triad fusion protein NitFhit from Drosophila melanogaster (Fruit fly).